We begin with the raw amino-acid sequence, 147 residues long: Large ribosomal subunit protein bL9 (147 aa).

The protein belongs to the bacterial ribosomal protein bL9 family.

In terms of biological role, binds to the 23S rRNA. The chain is Large ribosomal subunit protein bL9 from Gemmatimonas aurantiaca (strain DSM 14586 / JCM 11422 / NBRC 100505 / T-27).